A 501-amino-acid chain; its full sequence is Aspartate--tRNA ligase, cytoplasmic (501 aa).

T52 bears the Phosphothreonine mark. K74 carries the post-translational modification N6-acetyllysine. E229 contributes to the L-aspartate binding site. S249 is modified (phosphoserine). Residues 251–254 (QLYK) are aspartate. R273 contacts L-aspartate. ATP is bound by residues 273 to 275 (RAE) and 281 to 283 (RHL). At K374 the chain carries N6-acetyllysine. ATP is bound at residue E424. L-aspartate-binding residues include S427 and R431. 472-475 (GLER) lines the ATP pocket.

This sequence belongs to the class-II aminoacyl-tRNA synthetase family. Type 2 subfamily. Homodimer. Part of a multisubunit complex that groups tRNA ligases for Arg (RARS1), Asp (DARS1), Gln (QARS1), Ile (IARS1), Leu (LARS1), Lys (KARS1), Met (MARS1) the bifunctional ligase for Glu and Pro (EPRS1) and the auxiliary subunits AIMP1/p43, AIMP2/p38 and EEF1E1/p18.

The protein resides in the cytoplasm. The enzyme catalyses tRNA(Asp) + L-aspartate + ATP = L-aspartyl-tRNA(Asp) + AMP + diphosphate. Its function is as follows. Catalyzes the specific attachment of an amino acid to its cognate tRNA in a 2 step reaction: the amino acid (AA) is first activated by ATP to form AA-AMP and then transferred to the acceptor end of the tRNA. The chain is Aspartate--tRNA ligase, cytoplasmic (Dars1) from Rattus norvegicus (Rat).